Reading from the N-terminus, the 208-residue chain is Thymidylate kinase (208 aa).

10–17 (GIDGCGKT) serves as a coordination point for ATP.

It belongs to the thymidylate kinase family.

The enzyme catalyses dTMP + ATP = dTDP + ADP. Functionally, phosphorylation of dTMP to form dTDP in both de novo and salvage pathways of dTTP synthesis. The protein is Thymidylate kinase of Caldanaerobacter subterraneus subsp. tengcongensis (strain DSM 15242 / JCM 11007 / NBRC 100824 / MB4) (Thermoanaerobacter tengcongensis).